The following is a 56-amino-acid chain: MAVPKRRTSRSNTRSRRSQWKAKVPTLAKCSRGHVIRPHTVCGTCGRYNDRQVLDV.

Residues 1–20 show a composition bias toward basic residues; it reads MAVPKRRTSRSNTRSRRSQW. Residues 1 to 24 are disordered; sequence MAVPKRRTSRSNTRSRRSQWKAKV.

It belongs to the bacterial ribosomal protein bL32 family.

This chain is Large ribosomal subunit protein bL32, found in Frankia casuarinae (strain DSM 45818 / CECT 9043 / HFP020203 / CcI3).